Consider the following 395-residue polypeptide: DPQKPIYFNGKYHYYYLYNRGYPKGNGTEWRHYVSDDLVHWTDEGVAIPKYTNPDGDIWTGSVVVDKENTAGFGKNALVAIVTQPSAKDKKQEQYLWYSTDKGKSFKFYSGNPVMPNPGTDDFRDPKVIWDDQDNKWVMVMAEGSKIGFYESDNLKDWHYTSGFFPEQTGMVECPDLYMMRASDGTNKWVLGASANGKPWGKPNTYAYWTGSFDGKEFKADQTEAQWLDYGFDWYGGVTFEDSKSTDPLEKRYALAWMNNWDYANNTPTMKNGFNGTDSVIREIRLKEQDGTYSLVSQPIEALEQLTVSTDEIEDQDVNGSKTLSITGDTYQLDTDLSWSELKNAGVRLRESEDQKRHIDVGIFAEDGYAYVNRAATNQPDKSNTYVESKAPYDV.

Residue aspartate 1 is part of the active site. Substrate-binding positions include 59 to 60, 124 to 125, glutamate 173, and tryptophan 261; these read WT and RD.

The protein belongs to the glycosyl hydrolase 32 family.

Its subcellular location is the membrane. It catalyses the reaction Hydrolysis of (2-&gt;6)-beta-D-fructofuranan, to remove successive disaccharide residues as levanbiose, i.e. 6-(beta-D-fructofuranosyl)-D-fructose, from the end of the chain.. Its function is as follows. Catalyzes the degradation of levan mainly into levanbiose (difructose). Can also hydrolyze inulin. The polypeptide is Levanbiose-producing levanase (levB) (Geobacillus stearothermophilus (Bacillus stearothermophilus)).